An 87-amino-acid polypeptide reads, in one-letter code: Defensin-like protein 218 (87 aa).

The N-terminal stretch at 1 to 19 is a signal peptide; sequence MKTIVCFLTILILVSSCES. 3 disulfides stabilise this stretch: cysteine 51–cysteine 70, cysteine 54–cysteine 75, and cysteine 58–cysteine 77.

It belongs to the DEFL family.

It localises to the secreted. The protein is Defensin-like protein 218 of Arabidopsis thaliana (Mouse-ear cress).